The following is a 183-amino-acid chain: Probable actin-related protein 2/3 complex subunit 3 (183 aa).

It belongs to the ARPC3 family. In terms of assembly, component of the Arp2/3 complex.

Its subcellular location is the cytoplasm. It localises to the cytoskeleton. Functionally, functions as a component of the Arp2/3 complex which is involved in regulation of actin polymerization and together with an activating nucleation-promoting factor (NPF) mediates the formation of branched actin networks. The chain is Probable actin-related protein 2/3 complex subunit 3 (arx-5) from Caenorhabditis elegans.